We begin with the raw amino-acid sequence, 147 residues long: uncharacterized protein (147 aa).

Residues 7 to 147 (LEINYKTDEL…GHDVLVWAPK (141 aa)) enclose the N-acetyltransferase domain.

This is an uncharacterized protein from Staphylococcus haemolyticus (strain JCSC1435).